A 517-amino-acid polypeptide reads, in one-letter code: Rop guanine nucleotide exchange factor 9 (517 aa).

Disordered stretches follow at residues 16 to 76 (NLDR…SETE) and 428 to 517 (GEET…KDRH). Over residues 39–63 (MPESQTQDSLGGSPVETSRPMTSRL) the composition is skewed to polar residues. One can recognise a PRONE domain in the interval 65–429 (SRRQDKQQSE…SLARKQCTGE (365 aa)). The segment covering 66 to 76 (RRQDKQQSETE) has biased composition (basic and acidic residues). Residues 440 to 452 (ETDSASAGSSNYS) are compositionally biased toward polar residues.

Interacts with ARAC11/ROP1 and ARAC10/ROP11. Interacts with PRK6. As to expression, expressed in pollen grains and pollen tubes.

Its subcellular location is the cell membrane. In terms of biological role, guanine-nucleotide exchange factor (GEF) that acts as an activator of Rop (Rho of plants) GTPases by promoting the exchange of GDP for GTP. The chain is Rop guanine nucleotide exchange factor 9 from Arabidopsis thaliana (Mouse-ear cress).